The following is a 275-amino-acid chain: NH(3)-dependent NAD(+) synthetase (275 aa).

46-53 is a binding site for ATP; sequence GISGGQDS. Asp52 is a Mg(2+) binding site. Arg140 contributes to the deamido-NAD(+) binding site. ATP is bound at residue Thr160. Residue Glu165 coordinates Mg(2+). Residues Lys173 and Asp180 each contribute to the deamido-NAD(+) site. ATP-binding residues include Lys189 and Thr211. 260 to 261 contacts deamido-NAD(+); the sequence is HK.

This sequence belongs to the NAD synthetase family. Homodimer.

It carries out the reaction deamido-NAD(+) + NH4(+) + ATP = AMP + diphosphate + NAD(+) + H(+). It participates in cofactor biosynthesis; NAD(+) biosynthesis; NAD(+) from deamido-NAD(+) (ammonia route): step 1/1. Its function is as follows. Catalyzes the ATP-dependent amidation of deamido-NAD to form NAD. Uses ammonia as a nitrogen source. The protein is NH(3)-dependent NAD(+) synthetase of Shigella dysenteriae serotype 1 (strain Sd197).